Here is a 722-residue protein sequence, read N- to C-terminus: Inactive serine protease PAMR1 (722 aa).

The signal sequence occupies residues 1–21 (MALLVWSSLVVASLHLLGTAA). A glycan (N-linked (GlcNAc...) asparagine) is linked at N98. Disulfide bonds link C130-C152, C179-C201, C241-C252, C246-C262, C264-C273, C282-C331, C317-C344, and C416-C444. Positions 130–238 (CGEVIQAARG…DGFYVTFEEV (109 aa)) constitute a CUB domain. An EGF-like domain is found at 237–274 (EVTGCSSTPCFHDGTCIADKTGSYRCACLAGYTGRHCE). Sushi domains lie at 280-346 (KSCK…VCIK) and 393-446 (KPAL…SCIP). An N-linked (GlcNAc...) asparagine glycan is attached at N318. One can recognise a Peptidase S1 domain in the interval 447 to 722 (ICGKLENFNI…FKEWLEKNMK (276 aa)). N-linked (GlcNAc...) asparagine glycosylation is present at N455. Cysteines 491 and 507 form a disulfide. The N-linked (GlcNAc...) asparagine glycan is linked to N616. 2 disulfides stabilise this stretch: C632–C651 and C663–C699.

Belongs to the peptidase S1 family.

It localises to the secreted. Functionally, may play a role in regeneration of skeletal muscle. The protein is Inactive serine protease PAMR1 (pamr1) of Xenopus tropicalis (Western clawed frog).